Reading from the N-terminus, the 74-residue chain is Antimicrobial peptide AcrAP2 (74 aa).

The signal sequence occupies residues 1-22 (MEIKYLLTVFLVLLIVSDHCQA). Lysine amide is present on Lys-40. Positions 46–74 (NLDGQIDRFRNFRKRDAELEELLSKLPIY) are excised as a propeptide.

This sequence belongs to the non-disulfide-bridged peptide (NDBP) superfamily. Short antimicrobial peptide (group 4) family. In terms of tissue distribution, expressed by the venom gland.

The protein resides in the secreted. Its subcellular location is the target cell membrane. Its function is as follows. Has antimicrobial activity against the Gram-positive bacteria S.aureus (MIC=8 uM) and the yeast C.albicans (MIC=16 uM). Causes hemolysis on horse erythrocytes (64 uM for 100% hemolysis). Minimum bactericidal concentrations have also been tested against S.aureus and is four-fold higher (MBC=32 uM). The sequence is that of Antimicrobial peptide AcrAP2 from Androctonus crassicauda (Arabian fat-tailed scorpion).